Consider the following 80-residue polypeptide: UPF0248 protein MJ1316 (80 aa).

It belongs to the UPF0248 family.

The protein is UPF0248 protein MJ1316 of Methanocaldococcus jannaschii (strain ATCC 43067 / DSM 2661 / JAL-1 / JCM 10045 / NBRC 100440) (Methanococcus jannaschii).